The primary structure comprises 503 residues: Putative aldehyde dehydrogenase-like protein C9E9.09c (503 aa).

247–252 (GSTGVG) provides a ligand contact to NAD(+). S248 bears the Phosphoserine mark. E270 serves as the catalytic Proton acceptor. C304 serves as the catalytic Nucleophile. A Phosphoserine modification is found at S501.

This sequence belongs to the aldehyde dehydrogenase family.

This is Putative aldehyde dehydrogenase-like protein C9E9.09c from Schizosaccharomyces pombe (strain 972 / ATCC 24843) (Fission yeast).